The chain runs to 201 residues: Recombination protein RecR (201 aa).

The C4-type zinc finger occupies 57–72; sequence CKYCANFTNKDECDIC. The Toprim domain occupies 80 to 176; the sequence is TKLMIVTTNE…QIYRIGFGIP (97 aa).

The protein belongs to the RecR family.

Its function is as follows. May play a role in DNA repair. It seems to be involved in an RecBC-independent recombinational process of DNA repair. It may act with RecF and RecO. The protein is Recombination protein RecR of Ureaplasma parvum serovar 3 (strain ATCC 27815 / 27 / NCTC 11736).